The primary structure comprises 326 residues: MERKVHIIPYQVIKQEQQVNEIPRGVEMIQAPAVWNQTRGRGVKVAVLDTGCDADHPDLKARIIGGRNFTDDDEGDPEIFKDYNGHGTHVAGTIAATENENGVVGVAPEADLLIIKVLNKQGSGQYDWIIQGIYYAIEQKVDIISMSLGGPEDVPELHEAVKKAVASQILVMCAAGNEGDGDDRTDELGYPGCYNEVISVGAINFDRHASEFSNSNNEVDLVAPGEDILSTVPGGKYATFSGTSMATPHVAGALALIKQLANASFERDLTEPELYAQLIKRTIPLGNSPKMEGNGLLYLTAVEELSRIFDTQRVAGILSTASLKVK.

The region spanning 23 to 303 (PRGVEMIQAP…NGLLYLTAVE (281 aa)) is the Peptidase S8 domain. Residues D49, H86, and S244 each act as charge relay system in the active site.

The protein belongs to the peptidase S8 family.

Involved in the generation of beta- and alpha-amylases from the large amylase precursor. This is Intracellular serine protease (isp) from Paenibacillus polymyxa (Bacillus polymyxa).